The chain runs to 504 residues: One cut domain family member 2 (504 aa).

4 disordered regions span residues 29 to 95, 166 to 189, 274 to 332, and 485 to 504; these read LGTL…GTAA, KFHHPHPHHHPHHHHHHHHQRLSG, EQHL…QLEE, and WQDDLSTGGSSSTSSTCTKA. Residues 35-56 are compositionally biased toward gly residues; the sequence is PAGGGSGGGGGGGGGGGGGGPG. Residues 168–186 show a composition bias toward basic residues; it reads HHPHPHHHPHHHHHHHHQR. Positions 324-410 form a DNA-binding region, CUT; that stretch reads VATSGQLEEI…QRMSALRLAA (87 aa). The homeobox DNA-binding region spans 426-485; sequence QKKSRLVFTDLQRRTLFAIFKENKRPSKEMQITISQQLGLELTTVSNFFMNARRRSLEKW. Residues 490–504 show a composition bias toward low complexity; the sequence is STGGSSSTSSTCTKA.

The protein belongs to the CUT homeobox family.

It localises to the nucleus. Its function is as follows. Transcriptional activator. Activates the transcription of a number of liver genes such as HNF3B. The protein is One cut domain family member 2 (ONECUT2) of Homo sapiens (Human).